We begin with the raw amino-acid sequence, 740 residues long: MATANSIIVLDDDDEDEAAAQPGPSHPLPNAASPGAEAPSSSEPHGARGSSSSGGKKCYKLENEKLFEEFLELCKMQTADHPEVVPFLYNRQQRAHSLFLASAEFCNILSRVLSRARSRPAKLYVYINELCTVLKAHSAKKKLNLAPAATTSNEPSGNNPPTHLSLDPTNAENTASQSPRTRGSRRQIQRLEQLLALYVAEIRRLQEKELDLSELDDPDSAYLQEARLKRKLIRLFGRLCELKDCSSLTGRVIEQRIPYRGTRYPEVNRRIERLINKPGPDTFPDYGDVLRAVEKAAARHSLGLPRQQLQLMAQDAFRDVGIRLQERRHLDLIYNFGCHLTDDYRPGVDPALSDPVLARRLRENRSLAMSRLDEVISKYAMLQDKSEEGERKKRRARLQGTSSHSADTPEASLDSGEGPSGMASQGCPSASRAETDDEDDEESDEEEEEEEEEEEEEATDSEEEEDLEQMQEGQEDDEEEDEEEEAAAGKDGDKSPMSSLQISNEKNLEPGKQISRSSGEQQNKGRIVSPSLLSEEPLAPSSIDAESNGEQPEELTLEEESPVSQLFELEIEALPLDTPSSVETDISSSRKQSEEPFTTVLENGAGMVSSTSFNGGVSPHNWGDSGPPCKKSRKEKKQTGSGPLGNSYVERQRSVHEKNGKKICTLPSPPSPLASLAPVADSSTRVDSPSHGLVTSSLCIPSPARLSQTPHSQPPRPGTCKTSVATQCDPEEIIVLSDSD.

Residues 1–55 (MATANSIIVLDDDDEDEAAAQPGPSHPLPNAASPGAEAPSSSEPHGARGSSSSGG) form a disordered region. Positions 1–160 (MATANSIIVL…TSNEPSGNNP (160 aa)) are necessary for interaction with USP7 and ATRX. S25 bears the Phosphoserine mark. Low complexity predominate over residues 29 to 55 (PNAASPGAEAPSSSEPHGARGSSSSGG). Residue K142 forms a Glycyl lysine isopeptide (Lys-Gly) (interchain with G-Cter in SUMO2) linkage. The interval 147–185 (PAATTSNEPSGNNPPTHLSLDPTNAENTASQSPRTRGSR) is disordered. Residues 149 to 181 (ATTSNEPSGNNPPTHLSLDPTNAENTASQSPRT) are compositionally biased toward polar residues. S178 and S213 each carry phosphoserine. Coiled coils occupy residues 180-217 (RTRG…ELDD) and 358-399 (ARRL…ARLQ). Residues 183-417 (GSRRQIQRLE…TPEASLDSGE (235 aa)) are interaction with histone H3.3. A necessary for interaction with USP7 region spans residues 347–570 (GVDPALSDPV…SPVSQLFELE (224 aa)). A disordered region spans residues 384 to 724 (DKSEEGERKK…PRPGTCKTSV (341 aa)). The Nuclear localization signal motif lies at 391–395 (RKKRR). 2 positions are modified to phosphoserine: S412 and S424. Residues 430–489 (ASRAETDDEDDEESDEEEEEEEEEEEEEATDSEEEEDLEQMQEGQEDDEEEDEEEEAAAG) adopt a coiled-coil conformation. The span at 435–486 (TDDEDDEESDEEEEEEEEEEEEEATDSEEEEDLEQMQEGQEDDEEEDEEEEA) shows a compositional bias: acidic residues. T459 carries the phosphothreonine modification. S495 and S498 each carry phosphoserine. Polar residues predominate over residues 496–505 (PMSSLQISNE). Residues 501-625 (QISNEKNLEP…GVSPHNWGDS (125 aa)) are interaction with MAP3K5. The residue at position 512 (K512) is an N6-acetyllysine. Residues 514–524 (ISRSSGEQQNK) are compositionally biased toward polar residues. Residues 529 to 542 (SPSLLSEEPLAPSS) show a composition bias toward low complexity. Residues 551–561 (QPEELTLEEES) show a composition bias toward acidic residues. 2 positions are modified to phosphoserine: S561 and S580. Positions 578-590 (TPSSVETDISSSR) are enriched in polar residues. An interaction with SPOP region spans residues 626 to 740 (GPPCKKSRKE…EEIIVLSDSD (115 aa)). (Microbial infection) Interaction with Puumala hantavirus nucleoprotein regions lie at residues 627–634 (PPCKKSRK) and 658–663 (KNGKKI). Positions 628 to 634 (PCKKSRK) match the Nuclear localization signal motif. Glycyl lysine isopeptide (Lys-Gly) (interchain with G-Cter in SUMO1) cross-links involve residues K630 and K631. A compositionally biased stretch (basic and acidic residues) spans 650–660 (ERQRSVHEKNG). A phosphoserine mark is found at S668 and S671. The span at 673-683 (LASLAPVADSS) shows a compositional bias: low complexity. 4 positions are modified to phosphoserine: S688, S702, S737, and S739. Over residues 693 to 711 (LVTSSLCIPSPARLSQTPH) the composition is skewed to polar residues. Residues 733-740 (IIVLSDSD) form a sumo interaction motif (SIM) region.

Belongs to the DAXX family. In terms of assembly, homomultimer. Interacts (via C-terminus) with TNFRSF6 (via death domain). Interacts with PAX5, SLC2A4/GLUT4, MAP3K5, TGFBR2, phosphorylated dimeric HSPB1/HSP27, CENPC, ETS1, sumoylated PML, UBE2I, MCRS1 and TP53. Interacts (via N-terminus) with HIPK2 and HIPK3. Interacts with HIPK1, which induces translocation from PML/POD/ND10 nuclear bodies to chromatin and enhances association with HDAC1. Interacts (non-phosphorylated) with PAX3, PAX7, DEK, HDAC1, HDAC2, HDAC3, acetylated histone H4 and histones H2A, H2B, H3, H3.3 and H4. Interacts with SPOP; mediating CUL3-dependent proteasomal degradation. Interacts with CBP; the interaction is dependent the sumoylation of CBP and suppresses CBP transcriptional activity via recruitment of HDAC2 directly in the complex with TP53 and HIPK2. Interacts with AXIN1; the interaction stimulates the interaction of DAXX with TP53, stimulates 'Ser-46' phosphorylation of TP53 on and induces cell death on UV irradiation. Interacts with MDM2; the interaction is direct. Interacts with USP7; the interaction is direct and independent of MDM2 and TP53. Part of a complex with DAXX, MDM2 and USP7 under non-stress conditions. Interacts (via N-terminus) with RASSF1 (via C-terminus); the interaction is independent of MDM2 and TP53; RASSF1 isoform A disrupts interactions among MDM2, DAXX and USP7, thus contributing to the efficient activation of TP53 by promoting MDM2 self-ubiquitination in cell-cycle checkpoint control in response to DNA damage. Interacts with ATRX to form the chromatin remodeling complex ATRX:DAXX. Interacts with HSF1 (via homotrimeric form preferentially); this interaction relieves homotrimeric HSF1 from repression of its transcriptional activity by HSP90-dependent multichaperone complex upon heat shock. Interacts with SUMO1P1/SUMO5. As to quaternary structure, (Microbial infection) Interacts with human cytomegalovirus/HHV-5 tegument phosphoprotein pp71 and protein UL123. (Microbial infection) Interacts with Epstein-Barr virus protein BNRF1. In terms of assembly, (Microbial infection) Interacts with human adenovirus 5 E1B-55K protein; this interaction might alterate the normal interactions of DAXX, PML, and TP53, which may contribute to cell transformation. As to quaternary structure, (Microbial infection) Interacts with Puumala hantavirus nucleoprotein. Sumoylated with SUMO1 on multiple lysine residues. Post-translationally, phosphorylated by HIPK1 upon glucose deprivation. In terms of processing, polyubiquitinated; which is promoted by CUL3 and SPOP and results in proteasomal degradation. Ubiquitinated by MDM2; inducing its degradation. Deubiquitinated by USP7; leading to stabilize it. As to expression, ubiquitous.

Its subcellular location is the cytoplasm. It localises to the nucleus. It is found in the nucleoplasm. The protein localises to the PML body. The protein resides in the nucleolus. Its subcellular location is the chromosome. It localises to the centromere. In terms of biological role, transcription corepressor known to repress transcriptional potential of several sumoylated transcription factors. Down-regulates basal and activated transcription. Its transcription repressor activity is modulated by recruiting it to subnuclear compartments like the nucleolus or PML/POD/ND10 nuclear bodies through interactions with MCSR1 and PML, respectively. Seems to regulate transcription in PML/POD/ND10 nuclear bodies together with PML and may influence TNFRSF6-dependent apoptosis thereby. Inhibits transcriptional activation of PAX3 and ETS1 through direct protein-protein interactions. Modulates PAX5 activity; the function seems to involve CREBBP. Acts as an adapter protein in a MDM2-DAXX-USP7 complex by regulating the RING-finger E3 ligase MDM2 ubiquitination activity. Under non-stress condition, in association with the deubiquitinating USP7, prevents MDM2 self-ubiquitination and enhances the intrinsic E3 ligase activity of MDM2 towards TP53, thereby promoting TP53 ubiquitination and subsequent proteasomal degradation. Upon DNA damage, its association with MDM2 and USP7 is disrupted, resulting in increased MDM2 autoubiquitination and consequently, MDM2 degradation, which leads to TP53 stabilization. Acts as a histone chaperone that facilitates deposition of histone H3.3. Acts as a targeting component of the chromatin remodeling complex ATRX:DAXX which has ATP-dependent DNA translocase activity and catalyzes the replication-independent deposition of histone H3.3 in pericentric DNA repeats outside S-phase and telomeres, and the in vitro remodeling of H3.3-containing nucleosomes. Does not affect the ATPase activity of ATRX but alleviates its transcription repression activity. Upon neuronal activation associates with regulatory elements of selected immediate early genes where it promotes deposition of histone H3.3 which may be linked to transcriptional induction of these genes. Required for the recruitment of histone H3.3:H4 dimers to PML-nuclear bodies (PML-NBs); the process is independent of ATRX and facilitated by ASF1A; PML-NBs are suggested to function as regulatory sites for the incorporation of newly synthesized histone H3.3 into chromatin. In case of overexpression of centromeric histone variant CENPA (as found in various tumors) is involved in its mislocalization to chromosomes; the ectopic localization involves a heterotypic tetramer containing CENPA, and histones H3.3 and H4 and decreases binding of CTCF to chromatin. Proposed to mediate activation of the JNK pathway and apoptosis via MAP3K5 in response to signaling from TNFRSF6 and TGFBR2. Interaction with HSPB1/HSP27 may prevent interaction with TNFRSF6 and MAP3K5 and block DAXX-mediated apoptosis. In contrast, in lymphoid cells JNC activation and TNFRSF6-mediated apoptosis may not involve DAXX. Shows restriction activity towards human cytomegalovirus (HCMV). Plays a role as a positive regulator of the heat shock transcription factor HSF1 activity during the stress protein response. The protein is Death domain-associated protein 6 (DAXX) of Homo sapiens (Human).